The primary structure comprises 108 residues: Phosphoribosyl-AMP cyclohydrolase (108 aa).

Aspartate 73 provides a ligand contact to Mg(2+). Cysteine 74 serves as a coordination point for Zn(2+). Aspartate 75 and aspartate 77 together coordinate Mg(2+). Zn(2+) is bound by residues cysteine 90 and cysteine 97.

This sequence belongs to the PRA-CH family. Homodimer. It depends on Mg(2+) as a cofactor. Requires Zn(2+) as cofactor.

Its subcellular location is the cytoplasm. The enzyme catalyses 1-(5-phospho-beta-D-ribosyl)-5'-AMP + H2O = 1-(5-phospho-beta-D-ribosyl)-5-[(5-phospho-beta-D-ribosylamino)methylideneamino]imidazole-4-carboxamide. Its pathway is amino-acid biosynthesis; L-histidine biosynthesis; L-histidine from 5-phospho-alpha-D-ribose 1-diphosphate: step 3/9. Functionally, catalyzes the hydrolysis of the adenine ring of phosphoribosyl-AMP. The sequence is that of Phosphoribosyl-AMP cyclohydrolase from Lactiplantibacillus plantarum (strain ATCC BAA-793 / NCIMB 8826 / WCFS1) (Lactobacillus plantarum).